The following is a 178-amino-acid chain: Large ribosomal subunit protein uL6 (178 aa).

This sequence belongs to the universal ribosomal protein uL6 family. In terms of assembly, part of the 50S ribosomal subunit.

Its function is as follows. This protein binds to the 23S rRNA, and is important in its secondary structure. It is located near the subunit interface in the base of the L7/L12 stalk, and near the tRNA binding site of the peptidyltransferase center. This is Large ribosomal subunit protein uL6 from Helicobacter acinonychis (strain Sheeba).